Here is a 93-residue protein sequence, read N- to C-terminus: Large ribosomal subunit protein uL23cz/uL23cy (93 aa).

It belongs to the universal ribosomal protein uL23 family. As to quaternary structure, part of the 50S ribosomal subunit.

The protein localises to the plastid. Its subcellular location is the chloroplast. In terms of biological role, binds to 23S rRNA. This is Large ribosomal subunit protein uL23cz/uL23cy (rpl23-A) from Acorus calamus (Sweet flag).